Reading from the N-terminus, the 407-residue chain is Complement decay-accelerating factor transmembrane isoform (407 aa).

The first 39 residues, 1–39, serve as a signal peptide directing secretion; the sequence is MVSSTWGYDPRAGAGDLVITTTAAGAVTIAVLLFQTVCG. Sushi domains follow at residues 40-101, 102-165, 166-227, and 228-291; these read DCGP…FCEK, SCDT…FCKK, KSCP…VCTE, and IFCP…QCIE. Residues 40–368 are Extracellular-facing; it reads DCGPPPDIPN…NSGGDRYIYG (329 aa). 8 disulfide bridges follow: C41–C86, C70–C99, C103–C150, C134–C163, C168–C209, C195–C225, C230–C272, and C258–C289. N192 is a glycosylation site (N-linked (GlcNAc...) asparagine). N267 is a glycosylation site (N-linked (GlcNAc...) asparagine). Residues 301 to 361 are disordered; that stretch reads VVNVPSTGIP…STDKGESNSG (61 aa). Positions 306–324 are enriched in polar residues; the sequence is STGIPSTPQKPTTESVPNP. Over residues 343–357 the composition is skewed to basic and acidic residues; sequence HEPDTTTRTSTDKGE. A helical membrane pass occupies residues 369-389; sequence FVAVIAMIDSLIIVKTLWTIL. The Cytoplasmic portion of the chain corresponds to 390–407; the sequence is SPNRRSDFQGKERKDVSK.

Belongs to the receptors of complement activation (RCA) family. In terms of tissue distribution, testis, spleen and lymph node.

The protein resides in the membrane. This protein recognizes C4b and C3b fragments that condense with cell-surface hydroxyl or amino groups when nascent C4b and C3b are locally generated during C4 and c3 activation. Interaction of daf with cell-associated C4b and C3b polypeptides interferes with their ability to catalyze the conversion of C2 and factor B to enzymatically active C2a and Bb and thereby prevents the formation of C4b2a and C3bBb, the amplification convertases of the complement cascade. Inhibits complement activation by destabilizing and preventing the formation of C3 and C5 convertases, which prevents complement damage. The protein is Complement decay-accelerating factor transmembrane isoform (Cd55b) of Mus musculus (Mouse).